A 712-amino-acid polypeptide reads, in one-letter code: Lactoperoxidase (712 aa).

The N-terminal stretch at 1–21 (MLVCLHLQVFLASVALFEVAA) is a signal peptide. A propeptide spanning residues 22-117 (SDTIAQAAST…TDPSLDLTAL (96 aa)) is cleaved from the precursor. N-linked (GlcNAc...) (complex) asparagine; alternate glycosylation occurs at Asn106. Residue Asn106 is glycosylated (N-linked (GlcNAc...) (hybrid) asparagine; alternate). 4 disulfides stabilise this stretch: Cys123-Cys284, Cys132-Cys145, Cys246-Cys256, and Cys250-Cys274. Residue Asn212 is glycosylated (N-linked (GlcNAc...) (complex) asparagine; alternate). An N-linked (GlcNAc...) (hybrid) asparagine; alternate glycan is attached at Asn212. Asp225 is a binding site for heme b. The active-site Proton acceptor is His226. Asp227 provides a ligand contact to Ca(2+). Ca(2+)-binding residues include Thr301, Phe303, Asp305, and Ser307. Phosphoserine is present on Ser315. Residue Asn322 is glycosylated (N-linked (GlcNAc...) (high mannose) asparagine). A disulfide bridge connects residues Cys354 and Cys365. Residue Asn358 is glycosylated (N-linked (GlcNAc...) asparagine). Glu375 serves as a coordination point for heme b. Asn449 is a glycosylation site (N-linked (GlcNAc...) (complex) asparagine; alternate). N-linked (GlcNAc...) (hybrid) asparagine; alternate glycosylation occurs at Asn449. Residue Asn449 is glycosylated (N-linked (GlcNAc...) (high mannose) asparagine; alternate). His468 serves as a coordination point for heme b. The residue at position 482 (Tyr482) is a 3'-nitrotyrosine. 2 cysteine pairs are disulfide-bonded: Cys573–Cys630 and Cys671–Cys696.

This sequence belongs to the peroxidase family. XPO subfamily. It depends on Ca(2+) as a cofactor. Heme b serves as cofactor. Mammary gland; milk.

It is found in the secreted. It localises to the cytoplasm. The enzyme catalyses 2 a phenolic donor + H2O2 = 2 a phenolic radical donor + 2 H2O. It carries out the reaction thiocyanate + H2O2 + H(+) = hypothiocyanous acid + H2O. The catalysed reaction is iodide + H2O2 = hypoiodite + H2O. Its activity is regulated as follows. Inhibited by small molecule methimazole (MMZ). Heme-containing oxidoreductase which catalyzes the conversion of thiocyanate (SCN(-)) into antimicrobial agent hypothiocyanous acid (OSCN(-)) in the presence of hydrogen peroxide (H2O2). Also involved in the conversion of iodide (I(-)) into hypoiodite (IO(-)) in the presence of H2O2. Responsible for the inactivation of a wide range of micro-organisms and hence, important component of defense mechanism. Shows antibacterial properties against several Gram-positive bacteria including some Staphylococcus species and Gram-negative bacteria including E.coli, P.aeruginosa and some Salmonella species. Inhibits the growth of several fungi including A.niger, Trichoderma species, C.cassicola, P.meadii and C.salmonicolor. Does not have anti-fungal activity towards C.albicans and Pythium species. May protect the udder from infection and may promote growth in newborns. May be implicated in airway host defense against infection. May contribute to maintaining an appropriate H2O2 cellular level, therefore protecting cells from H2O2-caused injuries and inflammation. The polypeptide is Lactoperoxidase (LPO) (Capra hircus (Goat)).